The chain runs to 126 residues: Large ribosomal subunit protein bL20 (126 aa).

Belongs to the bacterial ribosomal protein bL20 family.

Its function is as follows. Binds directly to 23S ribosomal RNA and is necessary for the in vitro assembly process of the 50S ribosomal subunit. It is not involved in the protein synthesizing functions of that subunit. In Frankia casuarinae (strain DSM 45818 / CECT 9043 / HFP020203 / CcI3), this protein is Large ribosomal subunit protein bL20.